A 400-amino-acid chain; its full sequence is MDSELSQSMVGSYLNPPERMHLPSFTQNEAFQNCHPGTPPKMFNSPNNQALVSALKTLQEKIRRLELERTQAEDNLNLLSREAAQYKKALEEETNERNLAHQELIKQKKDISIQLSSAQSRCILLEKQLEYTKRMVLNVEREKTMILEQQAQLQREKEQDQMKLHAKLEKLHVLEKECLRLTATRQTAEDKIKCLEEKLKEEEHQRRLFQDRACEKTNCLKREPPQQRDHKFRTPTFERKKPFRTTSQARANPQSSGEPVSICDSLSELLMTMEEELDQMNMEHRELLRQTMQPGNHSVSEDIEQELEQLAKKMESKGDQISKLKKHQDSVRKLQEKIENSRINESSGIHGNPKGSKNLKTSPRKCVSETSSFQRDRGFQPVQVHSLQSKLRRDDIKWEQ.

At Ser45 the chain carries Phosphoserine. 2 coiled-coil regions span residues 47 to 111 (NNQA…KKDI) and 138 to 213 (NVER…QDRA). 2 disordered regions span residues 222–261 (REPP…EPVS) and 314–400 (MESK…KWEQ). The span at 244–258 (RTTSQARANPQSSGE) shows a compositional bias: polar residues. Residues 261-345 (SICDSLSELL…EKIENSRINE (85 aa)) are a coiled coil. 2 stretches are compositionally biased toward basic and acidic residues: residues 314–342 (MESK…ENSR) and 391–400 (LRRDDIKWEQ).

Belongs to the translokin family.

It is found in the cytoplasm. It localises to the cytoskeleton. Its subcellular location is the microtubule organizing center. The protein localises to the centrosome. Its function is as follows. Centrosomal protein which may be required for microtubule attachment to centrosomes. The polypeptide is Centrosomal protein CEP57L1 (Cep57l1) (Mus musculus (Mouse)).